The following is a 174-amino-acid chain: Methylated-DNA--protein-cysteine methyltransferase (174 aa).

Residue Cys-141 is the Nucleophile; methyl group acceptor of the active site.

This sequence belongs to the MGMT family.

It is found in the cytoplasm. The catalysed reaction is a 6-O-methyl-2'-deoxyguanosine in DNA + L-cysteinyl-[protein] = S-methyl-L-cysteinyl-[protein] + a 2'-deoxyguanosine in DNA. The enzyme catalyses a 4-O-methyl-thymidine in DNA + L-cysteinyl-[protein] = a thymidine in DNA + S-methyl-L-cysteinyl-[protein]. Functionally, involved in the cellular defense against the biological effects of O6-methylguanine (O6-MeG) and O4-methylthymine (O4-MeT) in DNA. Repairs the methylated nucleobase in DNA by stoichiometrically transferring the methyl group to a cysteine residue in the enzyme. This is a suicide reaction: the enzyme is irreversibly inactivated. The chain is Methylated-DNA--protein-cysteine methyltransferase from Thermococcus kodakarensis (strain ATCC BAA-918 / JCM 12380 / KOD1) (Pyrococcus kodakaraensis (strain KOD1)).